Reading from the N-terminus, the 306-residue chain is Phosphatidate cytidylyltransferase (306 aa).

The interval 1-28 is disordered; it reads MTTNDAGTGNPAEQPARGAKQQPATETS. Helical transmembrane passes span 36–56, 82–102, 103–123, 151–171, 180–200, 218–238, 241–261, and 285–305; these read AAIV…VFVP, GYLI…WLTW, PFGA…CMIW, ATVF…MLVY, FCMM…GVLF, FAGS…FLVG, PWIG…GDLV, and MDRL…LTLL.

It belongs to the CDS family.

It is found in the cell membrane. It catalyses the reaction a 1,2-diacyl-sn-glycero-3-phosphate + CTP + H(+) = a CDP-1,2-diacyl-sn-glycerol + diphosphate. It participates in phospholipid metabolism; CDP-diacylglycerol biosynthesis; CDP-diacylglycerol from sn-glycerol 3-phosphate: step 3/3. The protein is Phosphatidate cytidylyltransferase (cdsA) of Mycobacterium bovis (strain ATCC BAA-935 / AF2122/97).